Consider the following 444-residue polypeptide: MASTNTNLQKAIDLASKAAQEDKAGNYEEALQLYQHAVQYFLHVVKYEAQGDKAKQSIRAKCTEYLDRAEKLKEYLKKKEKKPQKPVKEEQSGPVDEKGNDSDGEAESDDPEKKKLQNQLQGAIVIERPNVKWSDVAGLEGAKEALKEAVILPIKFPHLFTGKRTPWRGILLFGPPGTGKSYLAKAVATEANNSTFFSISSSDLVSKWLGESEKLVKNLFQLARENKPSIIFIDEIDSLCGSRSENESEAARRIKTEFLVQMQGVGVDNDGILVLGATNIPWVLDSAIRRRFEKRIYIPLPEAHARAAMFRLHLGSTQNSLTEADFQELGRKTDGYSGADISIIVRDALMQPVRKVQSATHFKKVRGPSRADPNCIVNDLLTPCSPGDPGAIEMTWMDVPGDKLLEPVVSMWDMLRSLSSTKPTVNEQDLLKLKKFTEDFGQEG.

Residues 4–82 (TNTNLQKAID…KEYLKKKEKK (79 aa)) enclose the MIT domain. Residues 19–82 (AQEDKAGNYE…KEYLKKKEKK (64 aa)) are a coiled coil. The tract at residues 77–118 (KKKEKKPQKPVKEEQSGPVDEKGNDSDGEAESDDPEKKKLQN) is disordered. A compositionally biased stretch (basic and acidic residues) spans 86-101 (PVKEEQSGPVDEKGND). Phosphoserine is present on residues serine 102 and serine 108. Position 174–181 (174–181 (GPPGTGKS)) interacts with ATP. Residue serine 410 is modified to Phosphoserine.

The protein belongs to the AAA ATPase family. Proposed to be monomeric or homodimeric in nucleotide-free form and to oligomerize upon binding to ATP to form two stacked hexameric or heptameric rings with a central pore through which ESCRT-III substrates are translocated in an ATP-dependent manner. In vitro, associates on the inside of a helical tubular structure formed by a CHMP2A-CHMP3 polymer. Interacts with CHMP1A, CHMP1B, CHMP4B and CHMP6. Interacts with CHMP2A. Interacts with VPS4A; the interaction suggests a heteromeric assembly with VPS4A. Interacts with VTA1. High level expression seen in the kidney. It is also expressed in the heart, brain, spleen, lung, liver, skeletal muscle, and testis.

It is found in the late endosome membrane. It catalyses the reaction ATP + H2O = ADP + phosphate + H(+). Involved in late steps of the endosomal multivesicular bodies (MVB) pathway. Recognizes membrane-associated ESCRT-III assemblies and catalyzes their disassembly, possibly in combination with membrane fission. Redistributes the ESCRT-III components to the cytoplasm for further rounds of MVB sorting. MVBs contain intraluminal vesicles (ILVs) that are generated by invagination and scission from the limiting membrane of the endosome and mostly are delivered to lysosomes enabling degradation of membrane proteins, such as stimulated growth factor receptors, lysosomal enzymes and lipids. VPS4A/B are required for the exosomal release of SDCBP, CD63 and syndecan. Functionally, (Microbial infection) In conjunction with the ESCRT machinery also appears to function in topologically equivalent membrane fission events, such as the terminal stages of cytokinesis and enveloped virus budding (lentiviruses). This chain is Vacuolar protein sorting-associated protein 4B, found in Mus musculus (Mouse).